Here is a 218-residue protein sequence, read N- to C-terminus: Ras-related protein Rab-27B (218 aa).

Thr2 carries the post-translational modification N-acetylthreonine. GTP is bound at residue 16–24; sequence GDSGVGKTT. Positions 38 to 46 match the Effector region motif; sequence FITTVGIDF. GTP is bound by residues 74 to 78, 133 to 136, and 163 to 165; these read DTAGQ, NKAD, and SAA. Residues Cys123 and Cys188 are joined by a disulfide bond. Residues Cys216 and Cys218 are each lipidated (S-geranylgeranyl cysteine). Cys218 carries the post-translational modification Cysteine methyl ester.

The protein belongs to the small GTPase superfamily. Rab family. Interacts with SYTL2, SYTL4, MYRIP and MLPH. Interacts with RPH3A and RPH3A. Interacts (GDP-bound form preferentially) with DENND10.

Its subcellular location is the membrane. The protein localises to the late endosome. It catalyses the reaction GTP + H2O = GDP + phosphate + H(+). Regulated by guanine nucleotide exchange factors (GEFs) which promote the exchange of bound GDP for free GTP, GTPase activating proteins (GAPs) which increase the GTP hydrolysis activity, and GDP dissociation inhibitors which inhibit the dissociation of the nucleotide from the GTPase. Activated by GEFs such as DENND10. Small GTPase which cycles between active GTP-bound and inactive GDP-bound states. In its active state, binds to a variety of effector proteins to regulate homeostasis of late endocytic pathway, including endosomal positioning, maturation and secretion. Plays a role in NTRK2/TRKB axonal anterograde transport by facilitating the association of NTRK2/TRKB with KLC1. May be involved in targeting uroplakins to urothelial apical membranes. The polypeptide is Ras-related protein Rab-27B (Rab27b) (Rattus norvegicus (Rat)).